The following is a 444-amino-acid chain: Methylenetetrahydrofolate--tRNA-(uracil-5-)-methyltransferase TrmFO (444 aa).

FAD is bound at residue 10–15 (GAGLAG).

It belongs to the MnmG family. TrmFO subfamily. The cofactor is FAD.

The protein resides in the cytoplasm. The catalysed reaction is uridine(54) in tRNA + (6R)-5,10-methylene-5,6,7,8-tetrahydrofolate + NADH + H(+) = 5-methyluridine(54) in tRNA + (6S)-5,6,7,8-tetrahydrofolate + NAD(+). It carries out the reaction uridine(54) in tRNA + (6R)-5,10-methylene-5,6,7,8-tetrahydrofolate + NADPH + H(+) = 5-methyluridine(54) in tRNA + (6S)-5,6,7,8-tetrahydrofolate + NADP(+). Its function is as follows. Catalyzes the folate-dependent formation of 5-methyl-uridine at position 54 (M-5-U54) in all tRNAs. This chain is Methylenetetrahydrofolate--tRNA-(uracil-5-)-methyltransferase TrmFO, found in Streptococcus pneumoniae serotype 2 (strain D39 / NCTC 7466).